Consider the following 351-residue polypeptide: Fe(3+) ions import ATP-binding protein FbpC (351 aa).

Residues 7-237 (VELKNVTKRF…PASEFMASFM (231 aa)) form the ABC transporter domain. 39–46 (GPSGCGKT) provides a ligand contact to ATP.

The protein belongs to the ABC transporter superfamily. Fe(3+) ion importer (TC 3.A.1.10) family. In terms of assembly, the complex is composed of two ATP-binding proteins (FbpC), two transmembrane proteins (FbpB) and a solute-binding protein (FbpA).

The protein localises to the cell inner membrane. It catalyses the reaction Fe(3+)(out) + ATP + H2O = Fe(3+)(in) + ADP + phosphate + H(+). In terms of biological role, part of the ABC transporter complex FbpABC involved in Fe(3+) ions import. Responsible for energy coupling to the transport system. The chain is Fe(3+) ions import ATP-binding protein FbpC from Photorhabdus laumondii subsp. laumondii (strain DSM 15139 / CIP 105565 / TT01) (Photorhabdus luminescens subsp. laumondii).